We begin with the raw amino-acid sequence, 642 residues long: Uromodulin (642 aa).

The signal sequence occupies residues 1 to 26 (MGQLSSLTSVWMVVVVTSWVIIAANI). The EGF-like 1 domain maps to 32 to 64 (RSCSECHSNATCMEDGMVTTCSCLVGFTGSGFE). Intrachain disulfides connect Cys34–Cys43, Cys37–Cys52, Cys54–Cys65, Cys71–Cys85, Cys79–Cys94, Cys96–Cys108, Cys114–Cys128, Cys122–Cys137, Cys139–Cys150, Cys152–Cys163, Cys157–Cys172, Cys176–Cys269, Cys197–Cys284, Cys219–Cys257, Cys225–Cys289, Cys250–Cys258, Cys299–Cys308, Cys302–Cys317, Cys319–Cys348, Cys336–Cys426, and Cys367–Cys390. N-linked (GlcNAc...) asparagine glycosylation occurs at Asn40. The EGF-like 2; calcium-binding domain maps to 67–109 (DLDECAIPGAHNCSEGSSCMNTLGSYLCTCPDGFRLTPGLGCI). N-linked (GlcNAc...) asparagine glycosylation occurs at Asn78. The EGF-like 3; calcium-binding domain occupies 110–151 (DVDECSEPGLSRCHALATCINNKGNYSCVCPAGYRGDGQHCE). Asn134 is a glycosylation site (N-linked (GlcNAc...) asparagine). Positions 152-173 (CSPGSCGPGLDCVPVGDALVCA) are beta hairpin. A D10C region spans residues 174–293 (DPCQEHRILD…CYLAYCTDPT (120 aa)). Asn234 and Asn246 each carry an N-linked (GlcNAc...) asparagine glycan. N-linked (GlcNAc...) asparagine glycosylation is present at Asn277. The EGF-like 4 domain maps to 294 to 325 (SVLGTCEECSVEEDCKSHDGMWSCQCKQDFNV). Asn324 is a glycosylation site (N-linked (GlcNAc...) asparagine). Residues 335-430 (ECRPNDIKVS…KINFECSYPL (96 aa)) are ZP-N. One can recognise a ZP domain in the interval 335–590 (ECRPNDIKVS…PTCSGTRFRS (256 aa)). Asn397 and Asn448 each carry an N-linked (GlcNAc...) asparagine glycan. The segment at 431–454 (DMKVSLETSLQPIVSSLNISVGGT) is flexible ZP-N/ZP-C linker; important for secretion and polymerization into filaments. An internal hydrophobic patch (IHP) region spans residues 455–465 (GMFTVRMALFQ). The tract at residues 455 to 590 (GMFTVRMALF…PTCSGTRFRS (136 aa)) is ZP-C. 3 disulfides stabilise this stretch: Cys507/Cys567, Cys528/Cys583, and Cys572/Cys579. Residue Asn514 is glycosylated (N-linked (GlcNAc...) asparagine). An essential for cleavage by HPN region spans residues 587 to 590 (RFRS). Positions 599-607 (VLNLGPITR) are external hydrophobic patch (EHP); regulates polymerization into filaments. Residue Ser620 is the site of GPI-anchor amidated serine attachment. Positions 621–642 (SLGFLKVCLPLLLSATLTLMFQ) are cleaved as a propeptide — removed in mature form.

As to quaternary structure, homodimer that then polymerizes into long filaments. The filaments can additionally assemble laterally to form a sheet. The filaments consist of a zigzag-shaped backbone with laterally protruding arms which interact with bacterial adhesin fimH. Two fimH molecules can bind to a single UMOD monomer. N-glycosylated. In terms of processing, proteolytically cleaved at a conserved C-terminal proteolytic cleavage site to generate the secreted form found in urine. This cleavage is catalyzed by HPN. As to expression, detected in kidney and pancreas.

It is found in the apical cell membrane. It localises to the basolateral cell membrane. The protein resides in the cell projection. Its subcellular location is the cilium membrane. The protein localises to the secreted. In terms of biological role, functions in biogenesis and organization of the apical membrane of epithelial cells of the thick ascending limb of Henle's loop (TALH), where it promotes formation of complex filamentous gel-like structure that may play a role in the water barrier permeability. May serve as a receptor for binding and endocytosis of cytokines (IL-1, IL-2) and TNF. Facilitates neutrophil migration across renal epithelia. Its function is as follows. In the urine, may contribute to colloid osmotic pressure, retards passage of positively charged electrolytes, and inhibits formation of liquid containing supersaturated salts and subsequent formation of salt crystals. Protects against urinary tract infections by binding to type 1 fimbriated E.coli. Binds to bacterial adhesin fimH which mediates the stable formation of bacterial aggregates, prevents the binding of E.coli to uroplakins UPK1A and UPK1B which act as urothelial receptors for type I fimbriae, and allows for pathogen clearance through micturation. Also promotes aggregation of other bacteria including K.pneumoniae, P.aeruginosa and S.mitis and so may also protect against other uropathogens. The sequence is that of Uromodulin (UMOD) from Canis lupus familiaris (Dog).